The following is a 262-amino-acid chain: Zinc import ATP-binding protein ZnuC (262 aa).

One can recognise an ABC transporter domain in the interval 6-221; sequence IRLDKVAVTL…PAFVELFGKN (216 aa). 38–45 is a binding site for ATP; it reads GPNGAGKT.

It belongs to the ABC transporter superfamily. Zinc importer (TC 3.A.1.15.5) family. The complex is composed of two ATP-binding proteins (ZnuC), two transmembrane proteins (ZnuB) and a solute-binding protein (ZnuA).

The protein resides in the cell inner membrane. The catalysed reaction is Zn(2+)(out) + ATP(in) + H2O(in) = Zn(2+)(in) + ADP(in) + phosphate(in) + H(+)(in). Part of the ABC transporter complex ZnuABC involved in zinc import. Responsible for energy coupling to the transport system. The polypeptide is Zinc import ATP-binding protein ZnuC (Pseudomonas syringae pv. syringae (strain B728a)).